The primary structure comprises 330 residues: Protein RecA (330 aa).

66–73 (GPESSGKT) provides a ligand contact to ATP.

It belongs to the RecA family.

The protein localises to the cytoplasm. Functionally, can catalyze the hydrolysis of ATP in the presence of single-stranded DNA, the ATP-dependent uptake of single-stranded DNA by duplex DNA, and the ATP-dependent hybridization of homologous single-stranded DNAs. It interacts with LexA causing its activation and leading to its autocatalytic cleavage. The chain is Protein RecA from Bacteroides thetaiotaomicron (strain ATCC 29148 / DSM 2079 / JCM 5827 / CCUG 10774 / NCTC 10582 / VPI-5482 / E50).